The primary structure comprises 184 residues: GTP-binding protein Rheb (184 aa).

Lysine 8 participates in a covalent cross-link: Glycyl lysine isopeptide (Lys-Gly) (interchain with G-Cter in ubiquitin). GDP-binding residues include serine 16, valine 17, glycine 18, lysine 19, serine 20, serine 21, valine 32, and aspartate 33. Residues serine 16, valine 17, glycine 18, lysine 19, serine 20, serine 21, valine 32, aspartate 33, tyrosine 35, proline 37, threonine 38, glycine 63, asparagine 119, lysine 120, and aspartate 122 each coordinate GTP. Serine 20 is a binding site for Mg(2+). An Effector region motif is present at residues 35-43; it reads YDPTIENTF. Threonine 38 contacts Mg(2+). Asparagine 119 provides a ligand contact to GDP. Residue aspartate 122 participates in GDP binding. Serine 130 carries the post-translational modification Phosphoserine; by MAPKAPK5. Alanine 150 is a binding site for GDP. Residue alanine 150 participates in GTP binding. A Cysteine methyl ester modification is found at cysteine 181. Cysteine 181 carries S-farnesyl cysteine lipidation. The propeptide at 182–184 is removed in mature form; sequence SVM.

It belongs to the small GTPase superfamily. Rheb family. In terms of assembly, associates with the mTORC1 complex (MTOR, MLST8 and RPTOR) in a guanyl nucleotide-independent manner. Interacts with TSC2. Interacts with MCRS1; the interaction maintains RHEB at the lysosome in its active GTP-bound form and prevents its interaction with the mTORC1 complex inhibitor TSC2, ensuring activation of the mTORC1 complex by RHEB. Interacts (when prenylated) with PDE6D; this promotes release from membranes. In terms of processing, farnesylation is important for efficiently activating mTORC1-mediated signaling. Polyubiquitinated in response to amino acid, promoting its interaction with MTOR and mTORC1 activation. Deubiquitination by ATXN3 promotes recruitment of the TSC-TBC complex and RHEB inactivation by TSC2. Monoubiquitinated at Lys-8 by RNF152, promoting its association with the TSC-TBC complex. Deubiquitinated at Lys-8 by USP4, promoting mTORC1 activation. Post-translationally, phosphorylation by MAPKAPK5 impairs GTP-binding and inactivation.

It is found in the endomembrane system. The protein localises to the lysosome membrane. The protein resides in the golgi apparatus membrane. Its subcellular location is the endoplasmic reticulum membrane. It localises to the cytoplasm. It is found in the cytosol. The enzyme catalyses GTP + H2O = GDP + phosphate + H(+). Alternates between an inactive form bound to GDP and an active form bound to GTP. Inactivated by the TSC-TBC complex via the GTPase activating protein (GAP) domain of TSC2. Autoinhibited by Tyr-35, which constrains the active site conformation, restricting the access of the catalytic Asp-65 to the nucleotide-binding pocket. Small GTPase that acts as an allosteric activator of the canonical mTORC1 complex, an evolutionarily conserved central nutrient sensor that stimulates anabolic reactions and macromolecule biosynthesis to promote cellular biomass generation and growth. In response to nutrients, growth factors or amino acids, specifically activates the protein kinase activity of MTOR, the catalytic component of the mTORC1 complex: acts by causing a conformational change that allows the alignment of residues in the active site of MTOR, thereby enhancing the phosphorylation of ribosomal protein S6 kinase (RPS6KB1 and RPS6KB2) and EIF4EBP1 (4E-BP1). RHEB is also required for localization of the TSC-TBC complex to lysosomal membranes. In response to starvation, RHEB is inactivated by the TSC-TBC complex, preventing activation of mTORC1. Has low intrinsic GTPase activity. This Mus musculus (Mouse) protein is GTP-binding protein Rheb.